The following is a 73-amino-acid chain: Translation initiation factor IF-1 (73 aa).

Residues 1 to 72 enclose the S1-like domain; it reads MPKKDAIEVE…TRGRVTYRFK (72 aa).

It belongs to the IF-1 family. Component of the 30S ribosomal translation pre-initiation complex which assembles on the 30S ribosome in the order IF-2 and IF-3, IF-1 and N-formylmethionyl-tRNA(fMet); mRNA recruitment can occur at any time during PIC assembly.

It localises to the cytoplasm. One of the essential components for the initiation of protein synthesis. Stabilizes the binding of IF-2 and IF-3 on the 30S subunit to which N-formylmethionyl-tRNA(fMet) subsequently binds. Helps modulate mRNA selection, yielding the 30S pre-initiation complex (PIC). Upon addition of the 50S ribosomal subunit IF-1, IF-2 and IF-3 are released leaving the mature 70S translation initiation complex. In Dehalococcoides mccartyi (strain ATCC BAA-2266 / KCTC 15142 / 195) (Dehalococcoides ethenogenes (strain 195)), this protein is Translation initiation factor IF-1.